The primary structure comprises 138 residues: Large ribosomal subunit protein bL12c (138 aa).

It belongs to the bacterial ribosomal protein bL12 family. In terms of assembly, homodimer. Part of the ribosomal stalk of the 50S ribosomal subunit. Forms a multimeric L10(L12)X complex, where L10 forms an elongated spine to which 2 to 4 L12 dimers bind in a sequential fashion. Binds GTP-bound translation factors.

The protein localises to the plastid. Functionally, forms part of the ribosomal stalk which helps the ribosome interact with GTP-bound translation factors. Is thus essential for accurate translation. In Euglena longa (Euglenophycean alga), this protein is Large ribosomal subunit protein bL12c.